The sequence spans 38 residues: Photosystem II reaction center protein T (38 aa).

Residues 3-23 form a helical membrane-spanning segment; that stretch reads ALVYTFLLVSTLGIIFFAIFF.

This sequence belongs to the PsbT family. In terms of assembly, PSII is composed of 1 copy each of membrane proteins PsbA, PsbB, PsbC, PsbD, PsbE, PsbF, PsbH, PsbI, PsbJ, PsbK, PsbL, PsbM, PsbT, PsbY, PsbZ, Psb30/Ycf12, at least 3 peripheral proteins of the oxygen-evolving complex and a large number of cofactors. It forms dimeric complexes.

It localises to the plastid. The protein localises to the chloroplast thylakoid membrane. Functionally, found at the monomer-monomer interface of the photosystem II (PS II) dimer, plays a role in assembly and dimerization of PSII. PSII is a light-driven water plastoquinone oxidoreductase, using light energy to abstract electrons from H(2)O, generating a proton gradient subsequently used for ATP formation. The sequence is that of Photosystem II reaction center protein T from Secale cereale (Rye).